A 132-amino-acid chain; its full sequence is Small ribosomal subunit protein uS9 (132 aa).

It belongs to the universal ribosomal protein uS9 family.

The protein is Small ribosomal subunit protein uS9 of Leptospira interrogans serogroup Icterohaemorrhagiae serovar copenhageni (strain Fiocruz L1-130).